The chain runs to 333 residues: Phosphoribosylformylglycinamidine cyclo-ligase (333 aa).

It belongs to the AIR synthase family.

It localises to the cytoplasm. The enzyme catalyses 2-formamido-N(1)-(5-O-phospho-beta-D-ribosyl)acetamidine + ATP = 5-amino-1-(5-phospho-beta-D-ribosyl)imidazole + ADP + phosphate + H(+). Its pathway is purine metabolism; IMP biosynthesis via de novo pathway; 5-amino-1-(5-phospho-D-ribosyl)imidazole from N(2)-formyl-N(1)-(5-phospho-D-ribosyl)glycinamide: step 2/2. The chain is Phosphoribosylformylglycinamidine cyclo-ligase from Methanosarcina mazei (strain ATCC BAA-159 / DSM 3647 / Goe1 / Go1 / JCM 11833 / OCM 88) (Methanosarcina frisia).